Consider the following 536-residue polypeptide: Chlorophyllide a oxygenase, chloroplastic (536 aa).

The N-terminal 36 residues, 1–36, are a transit peptide targeting the chloroplast; sequence MNAAVFSPSALSLPISFSKTRSSFLSRKKGVKGEFR. Residues 123 to 150 adopt a coiled-coil conformation; it reads IGTVKKELAGLQEELSKAHQQVHISEAR. Residues 221–321 form the Rieske domain; that stretch reads WYPVAFTADL…CLEQEGMIWI (101 aa). Cys262, His264, Cys281, and His284 together coordinate [2Fe-2S] cluster. Fe cation-binding residues include Asp360, Asp364, His367, and His372.

It localises to the plastid. The protein localises to the chloroplast membrane. It is found in the chloroplast thylakoid membrane. It catalyses the reaction chlorophyllide a + 2 NADPH + 2 O2 + 2 H(+) = chlorophyllide b + 2 NADP(+) + 3 H2O. The protein operates within porphyrin-containing compound metabolism; chlorophyll biosynthesis. Its function is as follows. Catalyzes a two-step oxygenase reaction involved in the synthesis of chlorophyll b. Acts specifically on the non-esterified chlorophyllide a and not on chlorophyll a. In Arabidopsis thaliana (Mouse-ear cress), this protein is Chlorophyllide a oxygenase, chloroplastic (CAO).